The following is a 115-amino-acid chain: UPF0125 protein VP0646 (115 aa).

Positions 92–115 (RAEQAKAAGNADPVTGGKPNALRK) are disordered.

The protein belongs to the UPF0125 (RnfH) family.

The sequence is that of UPF0125 protein VP0646 from Vibrio parahaemolyticus serotype O3:K6 (strain RIMD 2210633).